A 328-amino-acid polypeptide reads, in one-letter code: P2Y purinoceptor 3 (328 aa).

At 1 to 22 (MSMANFTAGRNSCTFQEEFKQV) the chain is on the extracellular side. Asn5 carries an N-linked (GlcNAc...) asparagine glycan. The helical transmembrane segment at 23–43 (LLPLVYSVVFLLGLPLNAVVI) threads the bilayer. Residues 44 to 57 (GQIWLARKALTRTT) lie on the Cytoplasmic side of the membrane. A helical membrane pass occupies residues 58–78 (IYMLNLATADLLYVCSLPLLI). Over 79–96 (YNYTQKDYWPFGDFTCKF) the chain is Extracellular. Cys94 and Cys172 form a disulfide bridge. A helical transmembrane segment spans residues 97–117 (VRFQFYTNLHGSILFLTCISV). Topologically, residues 118-139 (QRYMGICHPLASWHKKKGKKLT) are cytoplasmic. Residues 140 to 160 (WLVCAAVWFIVIAQCLPTFVF) traverse the membrane as a helical segment. The Extracellular segment spans residues 161–189 (ASTGTQRNRTVCYDLSPPDRSASYFPYGI). The chain crosses the membrane as a helical span at residues 190–210 (TLTITGFLLPFAAILACYCSM). Residues 211–231 (ARILCQKDELIGLAVHKKKDK) are Cytoplasmic-facing. The helical transmembrane segment at 232 to 252 (AVRMIIIVVIVFSISFFPFHL) threads the bilayer. Topologically, residues 253-275 (TKTIYLIVRSSPTLPCPTLQAFA) are extracellular. Residues 276–298 (IAYKCTRPFASMNSVLDPILFYF) form a helical membrane-spanning segment. Over 299–323 (TQRKFRESTRYLLDKMSSKWRHDHC) the chain is Cytoplasmic.

Belongs to the G-protein coupled receptor 1 family.

The protein localises to the cell membrane. Its function is as follows. Receptor for extracellular UDP &gt; ADP = UTP. The activity of this receptor is mediated by G proteins which activate a phosphatidylinositol-calcium second messenger system. In Meleagris gallopavo (Wild turkey), this protein is P2Y purinoceptor 3 (P2RY3).